A 386-amino-acid chain; its full sequence is Small ribosomal subunit protein mS31 (386 aa).

This sequence belongs to the mitochondrion-specific ribosomal protein mS31 family. Component of the mitochondrial ribosome small subunit (28S) which comprises a 12S rRNA and about 30 distinct proteins.

Its subcellular location is the mitochondrion. This chain is Small ribosomal subunit protein mS31 (MRPS31), found in Bos taurus (Bovine).